The primary structure comprises 479 residues: Shugoshin (479 aa).

A coiled-coil region spans residues 36-76 (SLRIRSLESEVSNLLSENVSLREQIITLTQELERFEAARTL). 3 disordered regions span residues 109–145 (SRAV…GFLD), 220–247 (EHSL…QADT), and 263–479 (AKRK…SMPP). Residues 123–132 (QSRESGPKEV) are compositionally biased toward basic and acidic residues. Residues 270 to 286 (EDDESLFESSPSEDDEF) are compositionally biased toward acidic residues. Composition is skewed to polar residues over residues 290 to 303 (RPAQ…QNEH) and 318 to 328 (QSPTLSSQNDH). Basic and acidic residues-rich tracts occupy residues 335–352 (PQSE…RVLE) and 379–388 (GYNEKSEKPL). Residues 400-411 (KNASPKKSSTRT) show a composition bias toward polar residues.

Belongs to the shugoshin family.

The protein localises to the nucleus. Its subcellular location is the chromosome. It is found in the centromere. Functionally, plays a central role in chromosome cohesion during cell division by preventing premature dissociation of cohesin complex from centromeres after prophase, when most of cohesin complex dissociates from chromosomes arms. This chain is Shugoshin (sgo1), found in Emericella nidulans (strain FGSC A4 / ATCC 38163 / CBS 112.46 / NRRL 194 / M139) (Aspergillus nidulans).